The chain runs to 358 residues: Peptide chain release factor 1 (358 aa).

N5-methylglutamine is present on Gln-236.

The protein belongs to the prokaryotic/mitochondrial release factor family. Methylated by PrmC. Methylation increases the termination efficiency of RF1.

It is found in the cytoplasm. In terms of biological role, peptide chain release factor 1 directs the termination of translation in response to the peptide chain termination codons UAG and UAA. This is Peptide chain release factor 1 from Corynebacterium aurimucosum (strain ATCC 700975 / DSM 44827 / CIP 107346 / CN-1) (Corynebacterium nigricans).